The chain runs to 213 residues: Pyridoxine/pyridoxamine 5'-phosphate oxidase (213 aa).

Residues 60–65, 75–76, Lys-82, and Gln-104 contribute to the FMN site; these read RMVLMK and YS. Residue Lys-65 participates in substrate binding. Residues Tyr-122 and Arg-126 each contribute to the substrate site. FMN-binding positions include 139–140 and Trp-184; that span reads QS. 190–192 contacts substrate; that stretch reads RLH. Residue Arg-194 participates in FMN binding.

It belongs to the pyridoxamine 5'-phosphate oxidase family. In terms of assembly, homodimer. FMN serves as cofactor.

It carries out the reaction pyridoxamine 5'-phosphate + O2 + H2O = pyridoxal 5'-phosphate + H2O2 + NH4(+). The catalysed reaction is pyridoxine 5'-phosphate + O2 = pyridoxal 5'-phosphate + H2O2. It participates in cofactor metabolism; pyridoxal 5'-phosphate salvage; pyridoxal 5'-phosphate from pyridoxamine 5'-phosphate: step 1/1. The protein operates within cofactor metabolism; pyridoxal 5'-phosphate salvage; pyridoxal 5'-phosphate from pyridoxine 5'-phosphate: step 1/1. In terms of biological role, catalyzes the oxidation of either pyridoxine 5'-phosphate (PNP) or pyridoxamine 5'-phosphate (PMP) into pyridoxal 5'-phosphate (PLP). The chain is Pyridoxine/pyridoxamine 5'-phosphate oxidase from Nitrobacter hamburgensis (strain DSM 10229 / NCIMB 13809 / X14).